Reading from the N-terminus, the 428-residue chain is Threonine synthase (428 aa).

K107 bears the N6-(pyridoxal phosphate)lysine mark.

The protein belongs to the threonine synthase family. Pyridoxal 5'-phosphate serves as cofactor.

The enzyme catalyses O-phospho-L-homoserine + H2O = L-threonine + phosphate. The protein operates within amino-acid biosynthesis; L-threonine biosynthesis; L-threonine from L-aspartate: step 5/5. Is competitively inhibited by L-threo-3-hydroxyhomoserine phosphate. Functionally, catalyzes the gamma-elimination of phosphate from L-phosphohomoserine and the beta-addition of water to produce L-threonine. To a lesser extent, is able to slowly catalyze the deamination of L-threonine into alpha-ketobutyrate and that of L-serine and 3-chloroalanine into pyruvate. Is also able to rapidly convert vinylglycine to threonine, which proves that the pyridoxal p-quinonoid of vinylglycine is an intermediate in the TS reaction. The chain is Threonine synthase (thrC) from Escherichia coli (strain K12).